Reading from the N-terminus, the 386-residue chain is Phosphoglycerate kinase (386 aa).

Residues 21–23 (DLN), Arg-36, 59–62 (HLGR), Arg-113, and Arg-146 each bind substrate. ATP-binding positions include Lys-197, Glu-314, and 340 to 343 (GGDT).

Belongs to the phosphoglycerate kinase family. As to quaternary structure, monomer.

It is found in the cytoplasm. It catalyses the reaction (2R)-3-phosphoglycerate + ATP = (2R)-3-phospho-glyceroyl phosphate + ADP. It participates in carbohydrate degradation; glycolysis; pyruvate from D-glyceraldehyde 3-phosphate: step 2/5. The chain is Phosphoglycerate kinase from Vibrio campbellii (strain ATCC BAA-1116).